We begin with the raw amino-acid sequence, 447 residues long: N-succinylarginine dihydrolase (447 aa).

Residues A19–S28, N110, and H137–R138 each bind substrate. Residue E174 is part of the active site. R212 lines the substrate pocket. H248 is a catalytic residue. Substrate contacts are provided by D250 and N359. The active-site Nucleophile is the C365.

Belongs to the succinylarginine dihydrolase family. In terms of assembly, homodimer.

The enzyme catalyses N(2)-succinyl-L-arginine + 2 H2O + 2 H(+) = N(2)-succinyl-L-ornithine + 2 NH4(+) + CO2. It participates in amino-acid degradation; L-arginine degradation via AST pathway; L-glutamate and succinate from L-arginine: step 2/5. In terms of biological role, catalyzes the hydrolysis of N(2)-succinylarginine into N(2)-succinylornithine, ammonia and CO(2). In Escherichia coli O7:K1 (strain IAI39 / ExPEC), this protein is N-succinylarginine dihydrolase.